Consider the following 274-residue polypeptide: Large ribosomal subunit protein uL2 (274 aa).

2 disordered regions span residues 28–54 and 221–274; these read KPYAPLLEKSSKTGGRNNNGRITTRHI and RGTA…RTKK. Polar residues predominate over residues 39–49; the sequence is KTGGRNNNGRI.

This sequence belongs to the universal ribosomal protein uL2 family. In terms of assembly, part of the 50S ribosomal subunit. Forms a bridge to the 30S subunit in the 70S ribosome.

Its function is as follows. One of the primary rRNA binding proteins. Required for association of the 30S and 50S subunits to form the 70S ribosome, for tRNA binding and peptide bond formation. It has been suggested to have peptidyltransferase activity; this is somewhat controversial. Makes several contacts with the 16S rRNA in the 70S ribosome. This chain is Large ribosomal subunit protein uL2, found in Photorhabdus laumondii subsp. laumondii (strain DSM 15139 / CIP 105565 / TT01) (Photorhabdus luminescens subsp. laumondii).